The sequence spans 98 residues: Integration host factor subunit alpha (98 aa).

Belongs to the bacterial histone-like protein family. In terms of assembly, heterodimer of an alpha and a beta chain.

Its function is as follows. This protein is one of the two subunits of integration host factor, a specific DNA-binding protein that functions in genetic recombination as well as in transcriptional and translational control. In Mannheimia succiniciproducens (strain KCTC 0769BP / MBEL55E), this protein is Integration host factor subunit alpha.